Here is a 931-residue protein sequence, read N- to C-terminus: Mitochondrial cox1 translation regulator ppr4 (931 aa).

The transit peptide at 1–16 directs the protein to the mitochondrion; sequence MSKSFAYRHIWCFWRF. PPR repeat units follow at residues 247-277, 282-316, 429-461, 462-496, 497-531, 598-632, and 683-713; these read NEVL…MYRT, SFTA…RPKI, HLLN…KIKV, DERT…GIKT, SNQA…GITE, NVVH…GKAP, and PPSL…YLEY.

As to quaternary structure, component of the MRH5C complex, composed of mrh5, ppr4, mtf2, and sls1. Proteins mtf2 and sls1 form a subcomplex that serves as a scaffold to bring mrh5 and ppr4 together. The MRH5C complex associates with the small subunit of the mitochondrial ribosome.

The protein resides in the mitochondrion. Its function is as follows. RNA-binding translation activation factor that as part of the MRH5C complex specifically recruits cox1 mRNA to the mitochondrial ribosome for translation initiation. This chain is Mitochondrial cox1 translation regulator ppr4, found in Schizosaccharomyces pombe (strain 972 / ATCC 24843) (Fission yeast).